The following is a 319-amino-acid chain: Formimidoylglutamase (319 aa).

Asparagine 127, aspartate 150, histidine 152, aspartate 154, aspartate 242, and aspartate 244 together coordinate Mn(2+).

The protein belongs to the arginase family. The cofactor is Mn(2+).

The catalysed reaction is N-formimidoyl-L-glutamate + H2O = formamide + L-glutamate. Its pathway is amino-acid degradation; L-histidine degradation into L-glutamate; L-glutamate from N-formimidoyl-L-glutamate (hydrolase route): step 1/1. Catalyzes the conversion of N-formimidoyl-L-glutamate to L-glutamate and formamide. The chain is Formimidoylglutamase from Bacillus subtilis (strain 168).